We begin with the raw amino-acid sequence, 201 residues long: Small ribosomal subunit protein uS4 (201 aa).

The interval 21-43 (GTGKELNRRPYAPGDHGQGRRQK) is disordered. In terms of domain architecture, S4 RNA-binding spans 93-153 (RRLDNMVYRL…EKSKDMAIIK (61 aa)).

Belongs to the universal ribosomal protein uS4 family. In terms of assembly, part of the 30S ribosomal subunit. Contacts protein S5. The interaction surface between S4 and S5 is involved in control of translational fidelity.

One of the primary rRNA binding proteins, it binds directly to 16S rRNA where it nucleates assembly of the body of the 30S subunit. Functionally, with S5 and S12 plays an important role in translational accuracy. In Levilactobacillus brevis (strain ATCC 367 / BCRC 12310 / CIP 105137 / JCM 1170 / LMG 11437 / NCIMB 947 / NCTC 947) (Lactobacillus brevis), this protein is Small ribosomal subunit protein uS4.